The following is a 403-amino-acid chain: Methylthioribose-1-phosphate isomerase (403 aa).

Catalysis depends on D280, which acts as the Proton donor.

The protein belongs to the eIF-2B alpha/beta/delta subunits family. MtnA subfamily.

The protein resides in the cytoplasm. Its subcellular location is the nucleus. It catalyses the reaction 5-(methylsulfanyl)-alpha-D-ribose 1-phosphate = 5-(methylsulfanyl)-D-ribulose 1-phosphate. It functions in the pathway amino-acid biosynthesis; L-methionine biosynthesis via salvage pathway; L-methionine from S-methyl-5-thio-alpha-D-ribose 1-phosphate: step 1/6. Catalyzes the interconversion of methylthioribose-1-phosphate (MTR-1-P) into methylthioribulose-1-phosphate (MTRu-1-P). The sequence is that of Methylthioribose-1-phosphate isomerase from Eremothecium gossypii (strain ATCC 10895 / CBS 109.51 / FGSC 9923 / NRRL Y-1056) (Yeast).